The primary structure comprises 259 residues: Phosphate import ATP-binding protein PstB (259 aa).

One can recognise an ABC transporter domain in the interval 5–248 (IEVNDLNVYY…NIIFSNPSAQ (244 aa)). 37–44 (GPSGCGKS) serves as a coordination point for ATP.

Belongs to the ABC transporter superfamily. Phosphate importer (TC 3.A.1.7) family. In terms of assembly, the complex is composed of two ATP-binding proteins (PstB), two transmembrane proteins (PstC and PstA) and a solute-binding protein (PstS).

The protein localises to the cell membrane. The enzyme catalyses phosphate(out) + ATP + H2O = ADP + 2 phosphate(in) + H(+). Its function is as follows. Part of the ABC transporter complex PstSACB involved in phosphate import. Responsible for energy coupling to the transport system. This Leifsonia xyli subsp. xyli (strain CTCB07) protein is Phosphate import ATP-binding protein PstB.